Consider the following 392-residue polypeptide: GDP-mannose transporter (392 aa).

Positions 1-11 (MDDKKNEDLEM) are enriched in basic and acidic residues. The segment at 1-25 (MDDKKNEDLEMRNFNGRSSPSQRDP) is disordered. Topologically, residues 1–45 (MDDKKNEDLEMRNFNGRSSPSQRDPFLAKPGAAAKRGNSAFDLSN) are cytoplasmic. Residues 46 to 66 (VTNSPGISILAYCLASISMTV) traverse the membrane as a helical segment. Topologically, residues 67–76 (TNKYCVSGSN) are lumenal. A helical membrane pass occupies residues 77–97 (WNLNFFYLAIQSVVCIIAIII). Residues 98 to 116 (CKQAGLITNLAPFDTKKAK) are Cytoplasmic-facing. Residues 117-139 (TWFPISLLLVGMIYTSTKALQFL) form a helical membrane-spanning segment. At 140 to 142 (SVP) the chain is on the lumenal side. The chain crosses the membrane as a helical span at residues 143-165 (VYTIFKNLTIIVIAYGEVLWFGG). Residues 166 to 171 (SVTPSA) lie on the Cytoplasmic side of the membrane. A helical transmembrane segment spans residues 172 to 191 (LFSFGLMVLSSVVAAWADIQ). Over 192–210 (HALYGGGAAQSAEAAAALS) the chain is Lumenal. Residues 211–231 (TLNAGYAWMGMNVFCTAAYVL) form a helical membrane-spanning segment. The Cytoplasmic portion of the chain corresponds to 232-246 (SMRKVIKKMNFKDWD). A helical transmembrane segment spans residues 247-267 (TMFYNNLLTIPVLFVCSFIFE). N268 and N273 each carry an N-linked (GlcNAc...) asparagine glycan. Topologically, residues 268–285 (NWSSENLTKNFPLETRNN) are lumenal. The chain crosses the membrane as a helical span at residues 286-306 (LILGMIYSGLATIFISYCSAW). The Cytoplasmic segment spans residues 307–314 (CIRVTSST). A helical transmembrane segment spans residues 315–337 (TYSMVGALNKLPIAVSGLVFFAA). The Lumenal portion of the chain corresponds to 338–340 (PVT). A helical membrane pass occupies residues 341 to 360 (FGSVSAIFIGFVSGIVYAWA). The Cytoplasmic portion of the chain corresponds to 361–392 (KVRQNQSKGNILPTTQPVMSASSQSNRDAAKA). The tract at residues 373 to 392 (PTTQPVMSASSQSNRDAAKA) is disordered.

This sequence belongs to the TPT transporter family. SLC35D subfamily. As to quaternary structure, homooligomer.

The protein localises to the golgi apparatus membrane. The protein resides in the cytoplasmic vesicle membrane. It is found in the endoplasmic reticulum membrane. In terms of biological role, involved in the import of GDP-mannose from the cytoplasm into the Golgi lumen. In Botryotinia fuckeliana (strain B05.10) (Noble rot fungus), this protein is GDP-mannose transporter (gmt1).